The sequence spans 151 residues: HTH-type transcriptional regulator FL11 (151 aa).

The region spanning 5-66 (LDEIDRRIIK…IVNPEALGYS (62 aa)) is the HTH asnC-type domain. A DNA-binding region (H-T-H motif) is located at residues 24-43 (LREISKITGLAESTIHERIK). Residue 98–104 (ETTGDYD) coordinates L-arginine. L-lysine contacts are provided by residues Asn-118, Asp-122, and 133 to 135 (THT). Residues Asp-122 and 133–135 (THT) each bind L-arginine.

Homodimer. Binds DNA as a dimer and an octamer.

With respect to regulation, in the famine mode, FL11 forms dimers and acts as a repressor, leading to growth arrest. In the feast mode, in the presence of high concentrations of lysine or arginine, four dimers assemble into an octamer and cover the fl11 and lysine biosynthesis promoters. This leads to the inhibition of fl11 expression and lysine biosynthesis, decrease of the FL11 concentration in the cell, derepression of the target genes and activation of the metabolism. Functionally, DNA-binding protein involved in the repression of transcription of a large number of genes, thereby arresting growth, in response to environmental changes. The protein is HTH-type transcriptional regulator FL11 of Pyrococcus abyssi (strain GE5 / Orsay).